A 44-amino-acid chain; its full sequence is MPVYSITDKDLSKRIQLKENKTLKEKTANYVSEGRAVLTDVICK.

This is an uncharacterized protein from Haemophilus influenzae (strain ATCC 51907 / DSM 11121 / KW20 / Rd).